Here is a 120-residue protein sequence, read N- to C-terminus: Holo-[acyl-carrier-protein] synthase (120 aa).

2 residues coordinate Mg(2+): aspartate 6 and glutamate 55.

The protein belongs to the P-Pant transferase superfamily. AcpS family. Mg(2+) is required as a cofactor.

The protein resides in the cytoplasm. It catalyses the reaction apo-[ACP] + CoA = holo-[ACP] + adenosine 3',5'-bisphosphate + H(+). In terms of biological role, transfers the 4'-phosphopantetheine moiety from coenzyme A to a Ser of acyl-carrier-protein. This is Holo-[acyl-carrier-protein] synthase from Pelodictyon phaeoclathratiforme (strain DSM 5477 / BU-1).